The sequence spans 338 residues: Photosystem II assembly lipoprotein Ycf48 (338 aa).

The signal sequence occupies residues Met1–Gly23. The N-palmitoyl cysteine moiety is linked to residue Cys24. Residue Cys24 is the site of S-diacylglycerol cysteine attachment.

This sequence belongs to the Ycf48 family. In terms of assembly, part of early PSII assembly complexes which includes D1 (psbA) and PsbI; not found in mature PSII. Binds to the lumenal side of PSII complexes. Interacts with YidC.

The protein localises to the cellular thylakoid membrane. A factor required for optimal assembly of photosystem II (PSII), acting in the early stages of PSII assembly. Also plays a role in replacement of photodamaged D1 (psbA). Assists YidC in synthesis of chlorophyll-binding proteins. The sequence is that of Photosystem II assembly lipoprotein Ycf48 from Prochlorococcus marinus (strain NATL2A).